Consider the following 459-residue polypeptide: Argininosuccinate lyase (459 aa).

This sequence belongs to the lyase 1 family. Argininosuccinate lyase subfamily.

It is found in the cytoplasm. The enzyme catalyses 2-(N(omega)-L-arginino)succinate = fumarate + L-arginine. The protein operates within amino-acid biosynthesis; L-arginine biosynthesis; L-arginine from L-ornithine and carbamoyl phosphate: step 3/3. The protein is Argininosuccinate lyase of Prochlorococcus marinus subsp. pastoris (strain CCMP1986 / NIES-2087 / MED4).